The sequence spans 137 residues: MLQPKRTKFRKQMTGHNRGLALRGSKVSFGEFALKSVARGRLTARQIESARRALTRHVKRGGKIWIRVFPDKPVTKKPLEVRMGKGKGNVEYWVAQIQPGKVLYEIEGVTEELAREAFALAAAKLPLATSFVKRTVM.

The protein belongs to the universal ribosomal protein uL16 family. Part of the 50S ribosomal subunit.

Its function is as follows. Binds 23S rRNA and is also seen to make contacts with the A and possibly P site tRNAs. The protein is Large ribosomal subunit protein uL16 of Pseudomonas syringae pv. tomato (strain ATCC BAA-871 / DC3000).